The chain runs to 176 residues: Nuclear transcription factor Y subunit B-10 (176 aa).

Residues 1 to 15 (MAESQTGGGGGGSHE) are compositionally biased toward gly residues. Positions 1–29 (MAESQTGGGGGGSHESGGDQSPRSLNVRE) are disordered. Alanine 2 is modified (N-acetylalanine). Residues 34–40 (LPIANIS) mediate DNA binding. A subunit association domain (SAD) region spans residues 61 to 72 (MQECVSEFISFV). The interval 121–176 (GDTKGSGKGGESSAKRDGQPSQVSQFSQVPQQGSFSQGPYGNSQGSNMMVQMPGTE) is disordered. Low complexity predominate over residues 139-159 (QPSQVSQFSQVPQQGSFSQGP). Residues 160-169 (YGNSQGSNMM) show a composition bias toward polar residues.

The protein belongs to the NFYB/HAP3 subunit family. Heterotrimeric transcription factor composed of three components, NF-YA, NF-YB and NF-YC. NF-YB and NF-YC must interact and dimerize for NF-YA association and DNA binding. Expressed in the whole plant, except roots.

It is found in the nucleus. Functionally, component of the NF-Y/HAP transcription factor complex. The NF-Y complex stimulates the transcription of various genes by recognizing and binding to a CCAAT motif in promoters. This Arabidopsis thaliana (Mouse-ear cress) protein is Nuclear transcription factor Y subunit B-10 (NFYB10).